A 417-amino-acid chain; its full sequence is Serine hydroxymethyltransferase 2 (417 aa).

Residues leucine 121 and 125–127 contribute to the (6S)-5,6,7,8-tetrahydrofolate site; that span reads GHL. Lysine 229 is modified (N6-(pyridoxal phosphate)lysine). 354–356 contacts (6S)-5,6,7,8-tetrahydrofolate; the sequence is SPF.

The protein belongs to the SHMT family. In terms of assembly, homodimer. Pyridoxal 5'-phosphate is required as a cofactor.

The protein resides in the cytoplasm. The catalysed reaction is (6R)-5,10-methylene-5,6,7,8-tetrahydrofolate + glycine + H2O = (6S)-5,6,7,8-tetrahydrofolate + L-serine. The protein operates within one-carbon metabolism; tetrahydrofolate interconversion. It functions in the pathway amino-acid biosynthesis; glycine biosynthesis; glycine from L-serine: step 1/1. Functionally, catalyzes the reversible interconversion of serine and glycine with tetrahydrofolate (THF) serving as the one-carbon carrier. This reaction serves as the major source of one-carbon groups required for the biosynthesis of purines, thymidylate, methionine, and other important biomolecules. Also exhibits THF-independent aldolase activity toward beta-hydroxyamino acids, producing glycine and aldehydes, via a retro-aldol mechanism. The chain is Serine hydroxymethyltransferase 2 from Pseudomonas putida (strain ATCC 47054 / DSM 6125 / CFBP 8728 / NCIMB 11950 / KT2440).